Consider the following 129-residue polypeptide: Small ribosomal subunit protein uS11 (129 aa).

This sequence belongs to the universal ribosomal protein uS11 family. As to quaternary structure, part of the 30S ribosomal subunit. Interacts with proteins S7 and S18. Binds to IF-3.

Functionally, located on the platform of the 30S subunit, it bridges several disparate RNA helices of the 16S rRNA. Forms part of the Shine-Dalgarno cleft in the 70S ribosome. This chain is Small ribosomal subunit protein uS11, found in Yersinia pseudotuberculosis serotype O:1b (strain IP 31758).